The chain runs to 212 residues: Ribosomal RNA small subunit methyltransferase G (212 aa).

S-adenosyl-L-methionine-binding positions include glycine 80, leucine 85, 131–132 (AE), and arginine 146.

The protein belongs to the methyltransferase superfamily. RNA methyltransferase RsmG family.

The protein resides in the cytoplasm. It carries out the reaction guanosine(527) in 16S rRNA + S-adenosyl-L-methionine = N(7)-methylguanosine(527) in 16S rRNA + S-adenosyl-L-homocysteine. Its function is as follows. Specifically methylates the N7 position of guanine in position 527 of 16S rRNA. This chain is Ribosomal RNA small subunit methyltransferase G, found in Xylella fastidiosa (strain M23).